A 238-amino-acid polypeptide reads, in one-letter code: Uridylate kinase (238 aa).

Lys-12 to Gly-15 is a binding site for ATP. Residue Gly-54 participates in UMP binding. ATP contacts are provided by Gly-55 and Arg-59. UMP is bound by residues Asp-74 and Thr-135–Thr-142. 3 residues coordinate ATP: Thr-162, Tyr-168, and Asp-171.

This sequence belongs to the UMP kinase family. As to quaternary structure, homohexamer.

It is found in the cytoplasm. It catalyses the reaction UMP + ATP = UDP + ADP. Its pathway is pyrimidine metabolism; CTP biosynthesis via de novo pathway; UDP from UMP (UMPK route): step 1/1. Inhibited by UTP. In terms of biological role, catalyzes the reversible phosphorylation of UMP to UDP. This is Uridylate kinase from Lawsonia intracellularis (strain PHE/MN1-00).